We begin with the raw amino-acid sequence, 565 residues long: Sulfite reductase [NADPH] hemoprotein beta-component (565 aa).

Residues Cys429, Cys435, Cys474, and Cys478 each coordinate [4Fe-4S] cluster. Cys478 is a binding site for siroheme.

Belongs to the nitrite and sulfite reductase 4Fe-4S domain family. Alpha(8)-beta(8). The alpha component is a flavoprotein, the beta component is a hemoprotein. Requires siroheme as cofactor. [4Fe-4S] cluster serves as cofactor.

The catalysed reaction is hydrogen sulfide + 3 NADP(+) + 3 H2O = sulfite + 3 NADPH + 4 H(+). It participates in sulfur metabolism; hydrogen sulfide biosynthesis; hydrogen sulfide from sulfite (NADPH route): step 1/1. Component of the sulfite reductase complex that catalyzes the 6-electron reduction of sulfite to sulfide. This is one of several activities required for the biosynthesis of L-cysteine from sulfate. In Shewanella loihica (strain ATCC BAA-1088 / PV-4), this protein is Sulfite reductase [NADPH] hemoprotein beta-component.